Consider the following 302-residue polypeptide: Probable 2-(5''-triphosphoribosyl)-3'-dephosphocoenzyme-A synthase 1 (302 aa).

Belongs to the CitG/MdcB family.

The enzyme catalyses 3'-dephospho-CoA + ATP = 2'-(5''-triphospho-alpha-D-ribosyl)-3'-dephospho-CoA + adenine. This is Probable 2-(5''-triphosphoribosyl)-3'-dephosphocoenzyme-A synthase 1 from Salmonella typhi.